The sequence spans 274 residues: Transcription factor MYB58 (274 aa).

HTH myb-type domains follow at residues 11-63 and 64-118; these read KTKV…INYL and RPDV…KKRL. 2 DNA-binding regions (H-T-H motif) span residues 39-63 and 91-114; these read WRSL…INYL and WSKI…HTHL. 2 disordered regions span residues 121–160 and 237–274; these read ETNL…ISSK and SELG…LLIH. The span at 263-274 shows a compositional bias: low complexity; sequence SSLLESYELLIH.

Expressed in leaves. Specifically expressed in fibers and vessels undergoing secondary wall thickening, especially in inflorescence stems.

The protein localises to the nucleus. Its function is as follows. Transcriptional activator that binds DNA to the AC cis-elements 5'-ACCTACC-3', 5'-ACCAACC-3' and 5'-ACCTAAC-3' of promoters and specifically activates lignin biosynthetic genes during secondary wall formation mediated by SND1. The sequence is that of Transcription factor MYB58 from Arabidopsis thaliana (Mouse-ear cress).